The chain runs to 471 residues: Mitochondrial distribution and morphology protein 10 (471 aa).

Disordered stretches follow at residues 272–291, 374–394, and 436–455; these read TEMP…SNHG, ADTP…DEEN, and SWAA…GGVS. Low complexity predominate over residues 276 to 288; sequence SSSSSTSSTTTTS. A compositionally biased stretch (gly residues) spans 444-455; the sequence is AGGGQSVGGGVS.

It belongs to the MDM10 family. Component of the ER-mitochondria encounter structure (ERMES) or MDM complex, composed of mmm1, mdm10, mdm12 and mdm34. Associates with the mitochondrial outer membrane sorting assembly machinery SAM(core) complex.

The protein resides in the mitochondrion outer membrane. Functionally, component of the ERMES/MDM complex, which serves as a molecular tether to connect the endoplasmic reticulum and mitochondria. Components of this complex are involved in the control of mitochondrial shape and protein biogenesis and may function in phospholipid exchange. mdm10 is involved in the late assembly steps of the general translocase of the mitochondrial outer membrane (TOM complex). Functions in the tom40-specific route of the assembly of outer membrane beta-barrel proteins, including the association of tom40 with the receptor tom22 and small TOM proteins. Can associate with the SAM(core) complex as well as the mdm12-mmm1 complex, both involved in late steps of the major beta-barrel assembly pathway, that is responsible for biogenesis of all outer membrane beta-barrel proteins. May act as a switch that shuttles between both complexes and channels precursor proteins into the tom40-specific pathway. Plays a role in mitochondrial morphology and in the inheritance of mitochondria. This is Mitochondrial distribution and morphology protein 10 (mdmB) from Neosartorya fischeri (strain ATCC 1020 / DSM 3700 / CBS 544.65 / FGSC A1164 / JCM 1740 / NRRL 181 / WB 181) (Aspergillus fischerianus).